We begin with the raw amino-acid sequence, 339 residues long: Aspartate carbamoyltransferase catalytic subunit (339 aa).

Arg-60 and Thr-61 together coordinate carbamoyl phosphate. Lys-88 serves as a coordination point for L-aspartate. Carbamoyl phosphate is bound by residues Arg-110, His-143, and Gln-146. Positions 183 and 254 each coordinate L-aspartate. Residues Gly-295 and Pro-296 each coordinate carbamoyl phosphate.

It belongs to the aspartate/ornithine carbamoyltransferase superfamily. ATCase family. Heterododecamer (2C3:3R2) of six catalytic PyrB chains organized as two trimers (C3), and six regulatory PyrI chains organized as three dimers (R2).

It catalyses the reaction carbamoyl phosphate + L-aspartate = N-carbamoyl-L-aspartate + phosphate + H(+). It participates in pyrimidine metabolism; UMP biosynthesis via de novo pathway; (S)-dihydroorotate from bicarbonate: step 2/3. Its function is as follows. Catalyzes the condensation of carbamoyl phosphate and aspartate to form carbamoyl aspartate and inorganic phosphate, the committed step in the de novo pyrimidine nucleotide biosynthesis pathway. This Prochlorococcus marinus (strain MIT 9312) protein is Aspartate carbamoyltransferase catalytic subunit.